Consider the following 309-residue polypeptide: Probable cell division protein kinase ECU11_1290 (309 aa).

The 285-residue stretch at 4–288 (YENIKQVGEG…VISSHKNTYI (285 aa)) folds into the Protein kinase domain. ATP contacts are provided by residues 10–18 (VGEGAFGQV) and lysine 33. Residue aspartate 124 is the Proton acceptor of the active site.

This sequence belongs to the protein kinase superfamily. CMGC Ser/Thr protein kinase family. CDC2/CDKX subfamily.

It is found in the nucleus. The enzyme catalyses L-seryl-[protein] + ATP = O-phospho-L-seryl-[protein] + ADP + H(+). It catalyses the reaction L-threonyl-[protein] + ATP = O-phospho-L-threonyl-[protein] + ADP + H(+). Its function is as follows. May play a role in the control of the eukaryotic cell cycle. This is Probable cell division protein kinase ECU11_1290 from Encephalitozoon cuniculi (strain GB-M1) (Microsporidian parasite).